A 93-amino-acid chain; its full sequence is Beta-defensin 128 (93 aa).

A signal peptide spans 1–18; the sequence is MKLFLVLIILLFEVLTDG. Cystine bridges form between Cys24/Cys52, Cys32/Cys46, and Cys36/Cys53.

Belongs to the beta-defensin family.

It localises to the secreted. Has antibacterial activity. The protein is Beta-defensin 128 (DEFB128) of Pongo pygmaeus (Bornean orangutan).